Consider the following 145-residue polypeptide: Large ribosomal subunit protein uL16 (145 aa).

It belongs to the universal ribosomal protein uL16 family. In terms of assembly, part of the 50S ribosomal subunit.

Its function is as follows. Binds 23S rRNA and is also seen to make contacts with the A and possibly P site tRNAs. The chain is Large ribosomal subunit protein uL16 from Shouchella clausii (strain KSM-K16) (Alkalihalobacillus clausii).